The primary structure comprises 174 residues: Crossover junction endodeoxyribonuclease RuvC (174 aa).

Active-site residues include Asp8, Glu67, and Asp139. Mg(2+) is bound by residues Asp8, Glu67, and Asp139.

This sequence belongs to the RuvC family. As to quaternary structure, homodimer which binds Holliday junction (HJ) DNA. The HJ becomes 2-fold symmetrical on binding to RuvC with unstacked arms; it has a different conformation from HJ DNA in complex with RuvA. In the full resolvosome a probable DNA-RuvA(4)-RuvB(12)-RuvC(2) complex forms which resolves the HJ. It depends on Mg(2+) as a cofactor.

The protein localises to the cytoplasm. It carries out the reaction Endonucleolytic cleavage at a junction such as a reciprocal single-stranded crossover between two homologous DNA duplexes (Holliday junction).. Functionally, the RuvA-RuvB-RuvC complex processes Holliday junction (HJ) DNA during genetic recombination and DNA repair. Endonuclease that resolves HJ intermediates. Cleaves cruciform DNA by making single-stranded nicks across the HJ at symmetrical positions within the homologous arms, yielding a 5'-phosphate and a 3'-hydroxyl group; requires a central core of homology in the junction. The consensus cleavage sequence is 5'-(A/T)TT(C/G)-3'. Cleavage occurs on the 3'-side of the TT dinucleotide at the point of strand exchange. HJ branch migration catalyzed by RuvA-RuvB allows RuvC to scan DNA until it finds its consensus sequence, where it cleaves and resolves the cruciform DNA. In Ectopseudomonas mendocina (strain ymp) (Pseudomonas mendocina), this protein is Crossover junction endodeoxyribonuclease RuvC.